A 97-amino-acid chain; its full sequence is Large ribosomal subunit protein bL27 (97 aa).

Positions 1 to 12 are excised as a propeptide; that stretch reads MIKLNLSNLQHF. The tract at residues 13 to 38 is disordered; the sequence is AHKKGGGSTSNGRDSQAKRLGAKAAD.

It belongs to the bacterial ribosomal protein bL27 family. Post-translationally, the N-terminus is cleaved by ribosomal processing cysteine protease Prp.

The chain is Large ribosomal subunit protein bL27 from Streptococcus equi subsp. equi (strain 4047).